A 219-amino-acid chain; its full sequence is Proteasome subunit beta type-9 (219 aa).

The propeptide at 1–20 (MLQAGAPTAGSFRTGEVHTG) is removed in mature form. Residue T21 is the Nucleophile of the active site. An N6-acetyllysine mark is found at K53 and K109.

Belongs to the peptidase T1B family. The 26S proteasome consists of a 20S proteasome core and two 19S regulatory subunits. The 20S proteasome core is composed of 28 subunits that are arranged in four stacked rings, resulting in a barrel-shaped structure. The two end rings are each formed by seven alpha subunits, and the two central rings are each formed by seven beta subunits. The catalytic chamber with the active sites is on the inside of the barrel. Component of the immunoproteasome, where it displaces the equivalent housekeeping subunit PSMB6. Component of the spermatoproteasome, a form of the proteasome specifically found in testis. Interacts with NCOA2 and NCOA3. Post-translationally, autocleaved. The resulting N-terminal Thr residue of the mature subunit is responsible for the nucleophile proteolytic activity. In terms of tissue distribution, detected in the cytoplasmic lobe of elongated spermatids, in residual bodies, and in the acrosomal cap of round spermatids.

The protein resides in the cytoplasm. It is found in the nucleus. The enzyme catalyses Cleavage of peptide bonds with very broad specificity.. In terms of biological role, the proteasome is a multicatalytic proteinase complex which is characterized by its ability to cleave peptides with Arg, Phe, Tyr, Leu, and Glu adjacent to the leaving group at neutral or slightly basic pH. The proteasome has an ATP-dependent proteolytic activity. This subunit is involved in antigen processing to generate class I binding peptides. The polypeptide is Proteasome subunit beta type-9 (Psmb9) (Rattus norvegicus (Rat)).